The sequence spans 80 residues: uncharacterized protein (80 aa).

2 4Fe-4S ferredoxin-type domains span residues 21-49 (KIIEIDYNKCKNCLSCYRVCKNNVFAIKN) and 50-80 (NRVVVKNENNCTKCGECLKVCRYGAIILYDA). Cys-30, Cys-33, Cys-36, Cys-40, Cys-60, Cys-63, Cys-66, and Cys-70 together coordinate [4Fe-4S] cluster.

It depends on [4Fe-4S] cluster as a cofactor.

This is an uncharacterized protein from Methanocaldococcus jannaschii (strain ATCC 43067 / DSM 2661 / JAL-1 / JCM 10045 / NBRC 100440) (Methanococcus jannaschii).